A 292-amino-acid chain; its full sequence is Zinc finger protein SNAI3 (292 aa).

The interval 1–20 (MPRSFLVKTHSSHRVPNYRR) is SNAG domain. 4 C2H2-type zinc fingers span residues 152-174 (FECFHCHKPYHTLAGLARHRQLH), 183-205 (FTCKYCDKEYTSLGALKMHIRTH), 209-231 (CTCKICGKAFSRPWLLQGHVRTH), and 237-259 (YACSHCSRAFADRSNLRAHLQTH). Residues 265–287 (YRCRRCTKTFSRMSLLARHEESG) form a C2H2-type 5; degenerate zinc finger.

Belongs to the snail C2H2-type zinc-finger protein family.

Its subcellular location is the nucleus. In terms of biological role, seems to inhibit myoblast differentiation. Transcriptional repressor of E-box-dependent transactivation of downstream myogenic bHLHs genes. Binds preferentially to the canonical E-box sequences 5'-CAGGTG-3' and 5'-CACCTG-3'. The sequence is that of Zinc finger protein SNAI3 (SNAI3) from Homo sapiens (Human).